Reading from the N-terminus, the 197-residue chain is Double homeobox protein 5 (197 aa).

2 DNA-binding regions (homeobox) span residues 46 to 105 and 121 to 180; these read GRRM…LRQH and GRRK…RGQS. A disordered region spans residues 101-127; it reads QLRQHRRQSRPWPGRRDPQKGRRKRTA.

This sequence belongs to the paired homeobox family. Expressed in hepatoma Hep3B cells.

Its subcellular location is the nucleus. The polypeptide is Double homeobox protein 5 (DUX5) (Homo sapiens (Human)).